Here is a 315-residue protein sequence, read N- to C-terminus: Cobalamin biosynthesis protein CobD (315 aa).

5 helical membrane passes run 54–74, 78–98, 152–172, 203–223, and 295–315; these read GLLF…ILFL, IAYW…LAMT, ADGV…LALM, IANF…SFIL, and LLYM…LLLF.

Belongs to the CobD/CbiB family.

It localises to the cell membrane. It functions in the pathway cofactor biosynthesis; adenosylcobalamin biosynthesis. Converts cobyric acid to cobinamide by the addition of aminopropanol on the F carboxylic group. The chain is Cobalamin biosynthesis protein CobD from Listeria monocytogenes serovar 1/2a (strain ATCC BAA-679 / EGD-e).